The chain runs to 370 residues: Cysteine synthase 1 (370 aa).

The transit peptide at 1–16 (MFRQSVRRFATAALRS) directs the protein to the mitochondrion. Residue Lys73 is modified to N6-(pyridoxal phosphate)lysine. Residues Asn103, 209 to 213 (GTGGT), and Ser308 each bind pyridoxal 5'-phosphate.

Belongs to the cysteine synthase/cystathionine beta-synthase family. It depends on pyridoxal 5'-phosphate as a cofactor.

The protein localises to the mitochondrion. It carries out the reaction O-succinyl-L-serine + hydrogen sulfide = L-cysteine + succinate. The enzyme catalyses O-acetyl-L-serine + hydrogen sulfide = L-cysteine + acetate. The protein operates within amino-acid biosynthesis; L-cysteine biosynthesis; L-cysteine from L-serine: step 2/2. Its function is as follows. Catalyzes the conversion of O-succinyl-L-serine into cysteine, the last step in the cysteine biosynthesis pathway. Can also use O-acetyl-L-serine. The sequence is that of Cysteine synthase 1 from Emericella nidulans (strain FGSC A4 / ATCC 38163 / CBS 112.46 / NRRL 194 / M139) (Aspergillus nidulans).